A 216-amino-acid polypeptide reads, in one-letter code: Probable nicotinate-nucleotide adenylyltransferase (216 aa).

The protein belongs to the NadD family.

It catalyses the reaction nicotinate beta-D-ribonucleotide + ATP + H(+) = deamido-NAD(+) + diphosphate. It functions in the pathway cofactor biosynthesis; NAD(+) biosynthesis; deamido-NAD(+) from nicotinate D-ribonucleotide: step 1/1. In terms of biological role, catalyzes the reversible adenylation of nicotinate mononucleotide (NaMN) to nicotinic acid adenine dinucleotide (NaAD). In Geotalea uraniireducens (strain Rf4) (Geobacter uraniireducens), this protein is Probable nicotinate-nucleotide adenylyltransferase.